The chain runs to 396 residues: 1-deoxy-D-xylulose 5-phosphate reductoisomerase (396 aa).

Positions 13, 14, 15, 16, and 127 each coordinate NADPH. Lysine 128 is a 1-deoxy-D-xylulose 5-phosphate binding site. Glutamate 129 lines the NADPH pocket. Aspartate 153 lines the Mn(2+) pocket. The 1-deoxy-D-xylulose 5-phosphate site is built by serine 154, glutamate 155, serine 184, and histidine 207. Mn(2+) is bound at residue glutamate 155. NADPH is bound at residue glycine 213. Residues serine 220, asparagine 225, lysine 226, and glutamate 229 each coordinate 1-deoxy-D-xylulose 5-phosphate. Mn(2+) is bound at residue glutamate 229.

Belongs to the DXR family. The cofactor is Mg(2+). Mn(2+) serves as cofactor.

The catalysed reaction is 2-C-methyl-D-erythritol 4-phosphate + NADP(+) = 1-deoxy-D-xylulose 5-phosphate + NADPH + H(+). The protein operates within isoprenoid biosynthesis; isopentenyl diphosphate biosynthesis via DXP pathway; isopentenyl diphosphate from 1-deoxy-D-xylulose 5-phosphate: step 1/6. Functionally, catalyzes the NADPH-dependent rearrangement and reduction of 1-deoxy-D-xylulose-5-phosphate (DXP) to 2-C-methyl-D-erythritol 4-phosphate (MEP). The protein is 1-deoxy-D-xylulose 5-phosphate reductoisomerase of Pseudomonas fluorescens (strain Pf0-1).